Here is a 46-residue protein sequence, read N- to C-terminus: Large ribosomal subunit protein bL34 (46 aa).

Residues 1–17 are compositionally biased toward basic residues; sequence MTKRTLRGSVRKKKRTS. The tract at residues 1-26 is disordered; sequence MTKRTLRGSVRKKKRTSGFRARMETP.

Belongs to the bacterial ribosomal protein bL34 family.

This Pseudanabaena sp. (strain PCC 6903) protein is Large ribosomal subunit protein bL34 (rpmH).